The sequence spans 313 residues: Beta-ketoacyl-[acyl-carrier-protein] synthase III (313 aa).

Active-site residues include Cys112 and His238. The ACP-binding stretch occupies residues 239 to 243 (QANIR). Asn268 is an active-site residue.

This sequence belongs to the thiolase-like superfamily. FabH family. Homodimer.

It localises to the cytoplasm. The catalysed reaction is malonyl-[ACP] + acetyl-CoA + H(+) = 3-oxobutanoyl-[ACP] + CO2 + CoA. It functions in the pathway lipid metabolism; fatty acid biosynthesis. Functionally, catalyzes the condensation reaction of fatty acid synthesis by the addition to an acyl acceptor of two carbons from malonyl-ACP. Catalyzes the first condensation reaction which initiates fatty acid synthesis and may therefore play a role in governing the total rate of fatty acid production. Possesses both acetoacetyl-ACP synthase and acetyl transacylase activities. Its substrate specificity determines the biosynthesis of branched-chain and/or straight-chain of fatty acids. In Staphylococcus epidermidis (strain ATCC 35984 / DSM 28319 / BCRC 17069 / CCUG 31568 / BM 3577 / RP62A), this protein is Beta-ketoacyl-[acyl-carrier-protein] synthase III.